We begin with the raw amino-acid sequence, 691 residues long: DNA ligase (691 aa).

Residues 41–45 (DAEYD), 90–91 (SL), and Glu130 contribute to the NAD(+) site. Lys132 functions as the N6-AMP-lysine intermediate in the catalytic mechanism. Arg153, Glu190, Lys307, and Lys331 together coordinate NAD(+). Zn(2+) contacts are provided by Cys425, Cys428, Cys443, and Cys449. Residues 610–691 (APQGVLAGKT…MHTLLEGHAR (82 aa)) form the BRCT domain.

The protein belongs to the NAD-dependent DNA ligase family. LigA subfamily. Mg(2+) serves as cofactor. The cofactor is Mn(2+).

The enzyme catalyses NAD(+) + (deoxyribonucleotide)n-3'-hydroxyl + 5'-phospho-(deoxyribonucleotide)m = (deoxyribonucleotide)n+m + AMP + beta-nicotinamide D-nucleotide.. Functionally, DNA ligase that catalyzes the formation of phosphodiester linkages between 5'-phosphoryl and 3'-hydroxyl groups in double-stranded DNA using NAD as a coenzyme and as the energy source for the reaction. It is essential for DNA replication and repair of damaged DNA. In Burkholderia pseudomallei (strain 1106a), this protein is DNA ligase.